We begin with the raw amino-acid sequence, 220 residues long: Dual specificity protein phosphatase 19 (220 aa).

M1 bears the N-acetylmethionine mark. The 142-residue stretch at 64–205 (QVGVIKPWLL…LRTYQVGKES (142 aa)) folds into the Tyrosine-protein phosphatase domain. The active-site Phosphocysteine intermediate is the C149.

This sequence belongs to the protein-tyrosine phosphatase family. Non-receptor class dual specificity subfamily.

It catalyses the reaction O-phospho-L-tyrosyl-[protein] + H2O = L-tyrosyl-[protein] + phosphate. The catalysed reaction is O-phospho-L-seryl-[protein] + H2O = L-seryl-[protein] + phosphate. It carries out the reaction O-phospho-L-threonyl-[protein] + H2O = L-threonyl-[protein] + phosphate. Phosphatase activity is enhanced by Ca(2+) and Mn(2+). Functionally, has a dual specificity toward Ser/Thr and Tyr-containing proteins. The polypeptide is Dual specificity protein phosphatase 19 (Mus musculus (Mouse)).